The primary structure comprises 999 residues: Probable metabotropic glutamate receptor mgl-1 (999 aa).

L-glutamate is bound by residues serine 202, 223–225 (AST), tyrosine 273, glutamate 363, and lysine 455. An N-linked (GlcNAc...) asparagine glycan is attached at asparagine 518. 7 helical membrane passes run 682–704 (SLVP…VVYV), 719–739 (LSYI…VLLS), 751–769 (TGIG…VKTN), 792–812 (VVMT…WLSV), 836–857 (HHFL…TYAV), 871–893 (FIGF…FFGT), and 904–929 (LCIS…IILF). Residues 975-999 (DSTRRRSSRKTSQPTSTSSAHDTFL) form a disordered region. The span at 984–993 (KTSQPTSTSS) shows a compositional bias: low complexity.

Belongs to the G-protein coupled receptor 3 family.

Its subcellular location is the cell membrane. In terms of biological role, G-protein coupled receptor for glutamate. Ligand binding causes a conformation change that triggers signaling via guanine nucleotide-binding proteins (G proteins) and modulates the activity of down-stream effectors. In Caenorhabditis elegans, this protein is Probable metabotropic glutamate receptor mgl-1 (mgl-1).